Consider the following 85-residue polypeptide: COMM domain-containing protein 6 (85 aa).

Met1 is subject to N-acetylmethionine. The COMM domain occupies 18–85 (QLVDFQWKLG…KEIAAVIETV (68 aa)).

It belongs to the COMM domain-containing protein 6 family. As to quaternary structure, component of the commander complex consisting of the CCC subcomplex and the retriever subcomplex. Component of the CCC (COMMD/CCDC22/CCDC93) subcomplex consisting of COMMD1, COMMD2, COMMD3, COMMD4, COMMD5, COMMD6, COMMD7, COMMD8, COMMD9, COMMD10, CCDC22 and CCDC93; within the complex forms a heterodimer with COMMD1. May form a homodimer with isoform 1. Interacts with RELA, RELB, NFKB1/p105. Does not interact with NFKBIB. Interacts with CCDC22, CCDC93, SCNN1B, CUL4A. As to expression, ubiquitous. Expressed in brain, heart, skeletal muscle, lung, pancreas, liver, kidney, small intestine and placenta.

It localises to the nucleus. The protein localises to the cytoplasm. Functionally, scaffold protein in the commander complex that is essential for endosomal recycling of transmembrane cargos; the commander complex is composed of the CCC subcomplex and the retriever subcomplex. May modulate activity of cullin-RING E3 ubiquitin ligase (CRL) complexes. Down-regulates activation of NF-kappa-B. Inhibits TNF-induced NFKB1 activation. The protein is COMM domain-containing protein 6 (COMMD6) of Homo sapiens (Human).